A 384-amino-acid polypeptide reads, in one-letter code: Spermatogenesis-associated protein 32 (384 aa).

Residues 23–60 (RDDLSQHQIQEEQELEADMLEQKPQLQVDLDLDPDPDP) form a disordered region. A phosphoserine mark is found at Ser-167 and Ser-170. 3 disordered regions span residues 211-232 (DAHS…SSDL), 284-310 (VEER…LKSW), and 340-366 (LLQP…EKEN). Over residues 214 to 231 (SAPPTTSSQAPSPLLSSD) the composition is skewed to low complexity. The span at 353 to 366 (SKEDSVPPGKEKEN) shows a compositional bias: basic and acidic residues.

Interacts with syntaxin-1 and ACTB. As to expression, detected in testis, and on the acrosomal cap of spermatids.

In Homo sapiens (Human), this protein is Spermatogenesis-associated protein 32 (SPATA32).